A 671-amino-acid polypeptide reads, in one-letter code: Arginine--tRNA ligase (671 aa).

A 'HIGH' region motif is present at residues 124-134; that stretch reads PNVAKPMHVGH. The interval 223–254 is disordered; it reads KSDAKTAKEVSDQSESDENLKPKDKKKLRKNA. Residues 224–233 show a composition bias toward basic and acidic residues; it reads SDAKTAKEVS.

It belongs to the class-I aminoacyl-tRNA synthetase family. In terms of assembly, monomer.

It localises to the cytoplasm. The enzyme catalyses tRNA(Arg) + L-arginine + ATP = L-arginyl-tRNA(Arg) + AMP + diphosphate. The sequence is that of Arginine--tRNA ligase from Rhodopirellula baltica (strain DSM 10527 / NCIMB 13988 / SH1).